A 484-amino-acid chain; its full sequence is Maintenance of mitochondrial morphology protein 1 (484 aa).

Residues 1-22 (MSFQQSETVPVPAQSSLSFTQG) lie on the Lumenal side of the membrane. The chain crosses the membrane as a helical span at residues 23–43 (FLLGQLSVVLLIGAFIKFFIF). Residues 44-484 (GEAPPPPSRG…PGSLSGAAAR (441 aa)) lie on the Cytoplasmic side of the membrane. Disordered regions lie at residues 50–98 (PSRG…SSST), 272–319 (STPP…TGSP), and 388–484 (RTGV…AAAR). Basic residues predominate over residues 54–64 (LSHRASTHRRS). 2 stretches are compositionally biased toward polar residues: residues 65–78 (NSIY…ANNR) and 85–98 (SNSN…SSST). Positions 130-380 (QPESLDWFNV…EPRVQVVGLP (251 aa)) constitute an SMP-LTD domain. Over residues 272-286 (STPPLHTPSPSPSPP) the composition is skewed to pro residues. A compositionally biased stretch (polar residues) spans 399 to 408 (TGSNAASRSA). The segment covering 413 to 427 (LGDHHLGDREPEGLR) has biased composition (basic and acidic residues). 2 stretches are compositionally biased toward polar residues: residues 437–449 (QFDS…SYNV) and 466–476 (GALSEQFQMPG).

Belongs to the MMM1 family. As to quaternary structure, homodimer. Component of the ER-mitochondria encounter structure (ERMES) or MDM complex, composed of mmm1, mdm10, mdm12 and mdm34. A mmm1 homodimer associates with one molecule of mdm12 on each side in a pairwise head-to-tail manner, and the SMP-LTD domains of mmm1 and mdm12 generate a continuous hydrophobic tunnel for phospholipid trafficking.

Its subcellular location is the endoplasmic reticulum membrane. In terms of biological role, component of the ERMES/MDM complex, which serves as a molecular tether to connect the endoplasmic reticulum (ER) and mitochondria. Components of this complex are involved in the control of mitochondrial shape and protein biogenesis, and function in nonvesicular lipid trafficking between the ER and mitochondria. The mdm12-mmm1 subcomplex functions in the major beta-barrel assembly pathway that is responsible for biogenesis of all outer membrane beta-barrel proteins, and acts in a late step after the SAM complex. The mdm10-mdm12-mmm1 subcomplex further acts in the TOM40-specific pathway after the action of the mdm12-mmm1 complex. Essential for establishing and maintaining the structure of mitochondria and maintenance of mtDNA nucleoids. The protein is Maintenance of mitochondrial morphology protein 1 of Aspergillus niger (strain ATCC MYA-4892 / CBS 513.88 / FGSC A1513).